We begin with the raw amino-acid sequence, 109 residues long: MEQFECINVEEAHQKLHQQTAVLVDIRDPQSYAMGHTPGAFHLTNDTLGAFMRDNDFDTAVMVMCYHGNSSKGAAQYLLQQGFDKVYSVDGGFDAWHRHFPAEVARGTF.

The Rhodanese domain maps to 17–105 (HQQTAVLVDI…WHRHFPAEVA (89 aa)). The Cysteine persulfide intermediate role is filled by Cys-65.

The protein belongs to the GlpE family.

The protein localises to the cytoplasm. The enzyme catalyses thiosulfate + hydrogen cyanide = thiocyanate + sulfite + 2 H(+). It catalyses the reaction thiosulfate + [thioredoxin]-dithiol = [thioredoxin]-disulfide + hydrogen sulfide + sulfite + 2 H(+). Functionally, transferase that catalyzes the transfer of sulfur from thiosulfate to thiophilic acceptors such as cyanide or dithiols. May function in a CysM-independent thiosulfate assimilation pathway by catalyzing the conversion of thiosulfate to sulfite, which can then be used for L-cysteine biosynthesis. The protein is Thiosulfate sulfurtransferase GlpE of Klebsiella pneumoniae subsp. pneumoniae (strain ATCC 700721 / MGH 78578).